The sequence spans 234 residues: Proteasome subunit alpha type-2 (234 aa).

Ala2 carries the post-translational modification N-acetylalanine. Tyr6 carries the post-translational modification Phosphotyrosine. Ser7, Ser14, and Ser16 each carry phosphoserine. Phosphotyrosine is present on Tyr24. N6-acetyllysine is present on Lys70. Tyr76 and Tyr121 each carry phosphotyrosine. N6-acetyllysine is present on Lys171.

It belongs to the peptidase T1A family. As to quaternary structure, the 26S proteasome consists of a 20S proteasome core and two 19S regulatory subunits. The 20S proteasome core is a barrel-shaped complex made of 28 subunits that are arranged in four stacked rings. The two outer rings are each formed by seven alpha subunits, and the two inner rings are formed by seven beta subunits. The proteolytic activity is exerted by three beta-subunits PSMB5, PSMB6 and PSMB7. Phosphorylated on tyrosine residues; which may be important for nuclear import.

The protein localises to the cytoplasm. The protein resides in the nucleus. Component of the 20S core proteasome complex involved in the proteolytic degradation of most intracellular proteins. This complex plays numerous essential roles within the cell by associating with different regulatory particles. Associated with two 19S regulatory particles, forms the 26S proteasome and thus participates in the ATP-dependent degradation of ubiquitinated proteins. The 26S proteasome plays a key role in the maintenance of protein homeostasis by removing misfolded or damaged proteins that could impair cellular functions, and by removing proteins whose functions are no longer required. Associated with the PA200 or PA28, the 20S proteasome mediates ubiquitin-independent protein degradation. This type of proteolysis is required in several pathways including spermatogenesis (20S-PA200 complex) or generation of a subset of MHC class I-presented antigenic peptides (20S-PA28 complex). The protein is Proteasome subunit alpha type-2 (PSMA2) of Bos taurus (Bovine).